The sequence spans 111 residues: 2Fe-2S ferredoxin (111 aa).

The 2Fe-2S ferredoxin-type domain maps to 1 to 104 (MPKVLFLPHK…DIEVEIPLYN (104 aa)). [2Fe-2S] cluster contacts are provided by Cys-42, Cys-48, Cys-51, and Cys-87.

Belongs to the adrenodoxin/putidaredoxin family. The cofactor is [2Fe-2S] cluster.

Its function is as follows. Ferredoxin are iron-sulfur proteins that transfer electrons in a wide variety of metabolic reactions. The chain is 2Fe-2S ferredoxin (fdx) from Buchnera aphidicola subsp. Acyrthosiphon pisum (strain APS) (Acyrthosiphon pisum symbiotic bacterium).